Reading from the N-terminus, the 175-residue chain is Pycsar effector protein RsPycTM (175 aa).

Helical transmembrane passes span 17-37 (AKNA…ITLL), 44-64 (PLGF…AAII), and 146-166 (AGSL…LFCI).

Its subcellular location is the cell inner membrane. Functionally, pycsar (pyrimidine cyclase system for antiphage resistance) provides immunity against bacteriophage. The pyrimidine cyclase (PycC) synthesizes cyclic nucleotides in response to infection; these serve as specific second messenger signals. The signals activate the nearby effector, leading to bacterial cell death and abortive phage infection. A clade A Pycsar system. The effector gene of a two-gene Pycsar system. Expression of this and uridylate cyclase RsPycC (AC A0A4R2TZQ0) probably confers resistance to bacteriophage. The genes are probably only expressed in response to bacteriophage infection. Probably only responds to cUMP (produced by its cognate NTP cyclase), acts by impairing membrane integrity. This is Pycsar effector protein RsPycTM from Rhizobium sp. (strain PP-F2F-G36).